The chain runs to 79 residues: D-alanyl carrier protein (79 aa).

The 77-residue stretch at 1-77 (MDIKSEVLKI…KIIEGITELR (77 aa)) folds into the Carrier domain. Ser35 carries the post-translational modification O-(pantetheine 4'-phosphoryl)serine.

This sequence belongs to the DltC family. 4'-phosphopantetheine is transferred from CoA to a specific serine of apo-DCP.

Its subcellular location is the cytoplasm. It functions in the pathway cell wall biogenesis; lipoteichoic acid biosynthesis. Functionally, carrier protein involved in the D-alanylation of lipoteichoic acid (LTA). The loading of thioester-linked D-alanine onto DltC is catalyzed by D-alanine--D-alanyl carrier protein ligase DltA. The DltC-carried D-alanyl group is further transferred to cell membrane phosphatidylglycerol (PG) by forming an ester bond, probably catalyzed by DltD. D-alanylation of LTA plays an important role in modulating the properties of the cell wall in Gram-positive bacteria, influencing the net charge of the cell wall. The polypeptide is D-alanyl carrier protein (Streptococcus mutans serotype c (strain ATCC 700610 / UA159)).